The following is a 409-amino-acid chain: MLEHIRISFQSIFSHKLRSILTMLGVIIGIAAIIAIVSMLKGQSEQLKQSMIGMGNNAINVVYQPSGGEEESGGPQVSYASAPPVAEETVKAIKSDPMVKGLSLYYLSEGASVFHLTNVSYPQVYGVDDDYFDMFPIRITEGRKLTENDLNSTHQVVMINEAVRDELFPDGEALHKSIEMNGVPFKVVGVFKEKNQQESMFEGDYANPVLYVPKKVWPLIEGFDAPTQIAVQADSSEHIQEAGVMAADLLNQGLSEAELEKAEYSVMDLQEIAQEVESFNQSFALLLGGIASISLLVGGIGVMNIMLVSVTERTREIGIKKALGAKRRVILFQFLTEAVVLTSIGGILGVLAGFGIAKLLTVIFPMPFIVSIPAVVGALIFSMAVGIIFGLLPSIKASKLQPVDALRYE.

A run of 4 helical transmembrane segments spans residues 20 to 40 (ILTMLGVIIGIAAIIAIVSML), 283 to 303 (FALLLGGIASISLLVGGIGVM), 344 to 364 (IGGILGVLAGFGIAKLLTVIF), and 372 to 392 (IPAVVGALIFSMAVGIIFGLL).

It belongs to the ABC-4 integral membrane protein family.

The protein localises to the cell membrane. This is an uncharacterized protein from Bacillus subtilis (strain 168).